We begin with the raw amino-acid sequence, 212 residues long: Anaphase-promoting complex subunit 10 (212 aa).

In terms of domain architecture, DOC spans M12–G196.

The protein belongs to the APC10 family. In terms of assembly, the APC/C complex is probably composed of at least 12 subunits: apc-2, apc-10, apc-11, cdc-26, emb-1, emb-27, emb-30, mat-1, mat-2, mat-3, such-1 and gfi-3.

The protein operates within protein modification; protein ubiquitination. In terms of biological role, probable component of the anaphase promoting complex/cyclosome (APC/C), a cell cycle-regulated E3 ubiquitin ligase that controls progression through mitosis and the G1 phase of the cell cycle. The APC/C complex acts by mediating ubiquitination and subsequent degradation of target proteins. The chain is Anaphase-promoting complex subunit 10 from Caenorhabditis elegans.